We begin with the raw amino-acid sequence, 358 residues long: E3 ubiquitin-protein ligase RFI2 (358 aa).

The disordered stretch occupies residues 1–34 (MAGAKDSGCDDDLRIAGGCDPGKRGNPEDSSSPV). The RING-type; atypical zinc-finger motif lies at 38-83 (CSICLESVLDDGTRSKAKLQCGHQFHLDCIGSAFNMKGAMQCPNCR). Disordered regions lie at residues 174 to 201 (GPAATPRTSDNNSTDDHPWNSHSNDHFH) and 248 to 313 (SNQR…DQNV). The span at 187–201 (TDDHPWNSHSNDHFH) shows a compositional bias: basic and acidic residues. Polar residues predominate over residues 248–266 (SNQRSSPAINSYQGSSTQM). A compositionally biased stretch (pro residues) spans 299 to 309 (LPPPPPPPPMP).

It is found in the nucleus. The enzyme catalyses S-ubiquitinyl-[E2 ubiquitin-conjugating enzyme]-L-cysteine + [acceptor protein]-L-lysine = [E2 ubiquitin-conjugating enzyme]-L-cysteine + N(6)-ubiquitinyl-[acceptor protein]-L-lysine.. It functions in the pathway protein modification; protein ubiquitination. In terms of biological role, mediates phytochrome (phyA and phyB)-controlled seedling deetiolation responses such as hypocotyl elongation in response to red and far-red light. Required for light-induced expression of LHCB3 and CHALCONE SYNTHASE (CHS). Negatively regulates CONSTANS (CO) and FLOWERING LOCUS T (FT) expression and photoperiodic flowering. This is E3 ubiquitin-protein ligase RFI2 from Arabidopsis thaliana (Mouse-ear cress).